A 197-amino-acid chain; its full sequence is Recombination protein RecR (197 aa).

The segment at 56 to 71 (CVRCFSLTDAETCNFC) adopts a C4-type zinc-finger fold. The region spanning 79–174 (RVLCVVETFA…RVTRIAQGLP (96 aa)) is the Toprim domain.

Belongs to the RecR family.

Its function is as follows. May play a role in DNA repair. It seems to be involved in an RecBC-independent recombinational process of DNA repair. It may act with RecF and RecO. The chain is Recombination protein RecR from Myxococcus xanthus (strain DK1622).